A 518-amino-acid chain; its full sequence is WEB family protein At2g40480 (518 aa).

Coiled coils occupy residues 95–141 (DIKR…LQQE) and 188–219 (DNLV…AKLT). A disordered region spans residues 303–337 (NGESQDDDSEFCFPEPPRSPVTPRGLRIDNDFSTD). Over residues 328–337 (LRIDNDFSTD) the composition is skewed to basic and acidic residues. A coiled-coil region spans residues 344–375 (ILKKLEEATEGVKQSKQALEAALNRVEIANVK).

The protein belongs to the WEB family.

The protein is WEB family protein At2g40480 of Arabidopsis thaliana (Mouse-ear cress).